Consider the following 186-residue polypeptide: MKTAHEIRPGNVIMLDGSPWVVQKTETTRSGRNAAIVKLKLKHVLLDSGTEQTFKGEDKMDVIVLERLDCTYSYFADPMYVFMDADYNQYDVEADNLGDAAAYIIDGMEETCQVTFYEGKAISVELPTHIVREVIYTEPSARGDTSGKVMKPATITGGGTVTVADFVKVGDKIEIDTRTGEFKKRA.

It belongs to the elongation factor P family.

It localises to the cytoplasm. The protein operates within protein biosynthesis; polypeptide chain elongation. Involved in peptide bond synthesis. Stimulates efficient translation and peptide-bond synthesis on native or reconstituted 70S ribosomes in vitro. Probably functions indirectly by altering the affinity of the ribosome for aminoacyl-tRNA, thus increasing their reactivity as acceptors for peptidyl transferase. The sequence is that of Elongation factor P from Shewanella denitrificans (strain OS217 / ATCC BAA-1090 / DSM 15013).